Consider the following 261-residue polypeptide: uncharacterized protein (261 aa).

The first 22 residues, 1–22, serve as a signal peptide directing secretion; that stretch reads MGYLKKVGMCISLLIVIIFVTS. A lipid anchor (N-palmitoyl cysteine) is attached at Cys23. A lipid anchor (S-diacylglycerol cysteine) is attached at Cys23.

The protein belongs to the staphylococcal tandem lipoprotein family.

It localises to the cell membrane. This is an uncharacterized protein from Staphylococcus aureus (strain bovine RF122 / ET3-1).